We begin with the raw amino-acid sequence, 58 residues long: DNA-directed RNA polymerases I, II, and III subunit RPABC4 (58 aa).

Zn(2+) is bound by residues cysteine 19, cysteine 22, cysteine 36, and cysteine 39. The segment at 19–39 adopts a C4-type zinc-finger fold; sequence CGECHTENEIKSRDPIRCREC.

Belongs to the archaeal Rpo12/eukaryotic RPC10 RNA polymerase subunit family. As to quaternary structure, component of the RNA polymerase I (Pol I), RNA polymerase II (Pol II) and RNA polymerase III (Pol III) complexes consisting of at least 13, 12 and 17 subunits, respectively. Pol I complex consists of a ten-subunit catalytic core composed of POLR1A/RPA1, POLR1B/RPA2, POLR1C/RPAC1, POLR1D/RPAC2, POLR1H/RPA12, POLR2E/RPABC1, POLR2F/RPABC2, POLR2H/RPABC3, POLR2K/RPABC4 and POLR2L/RPABC5; a mobile stalk subunit POLR1F/RPA43 protruding from the core and additional subunits homologous to general transcription factors POLR1E/RPA49 and POLR1G/RPA34. Part of Pol I pre-initiation complex (PIC), in which Pol I core assembles with RRN3 and promoter-bound UTBF and SL1/TIF-IB complex. Pol II complex contains a ten-subunit catalytic core composed of POLR2A/RPB1, POLR2B/RPB2, POLR2C/RPB3, POLR2I/RPB9, POLR2J/RPB11, POLR2E/RPABC1, POLR2F/RPABC2, POLR2H/RPABC3, POLR2K/RPABC4 and POLR2L/RPABC5 and a mobile stalk composed of two subunits POLR2D/RPB4 and POLR2G/RPB7. Part of Pol II(G) complex, in which Pol II core associates with an additional subunit POLR2M; unlike conventional Pol II, Pol II(G) functions as a transcriptional repressor. Part of TBP-based Pol II pre-initiation complex (PIC), in which Pol II core assembles with general transcription factors and other specific initiation factors including GTF2E1, GTF2E2, GTF2F1, GTF2F2, TCEA1, ERCC2, ERCC3, GTF2H2, GTF2H3, GTF2H4, GTF2H5, GTF2A1, GTF2A2, GTF2B and TBP; this large multi-subunit PIC complex mediates DNA unwinding and targets Pol II core to the transcription start site where the first phosphodiester bond forms. Pol III complex consists of a ten-subunit catalytic core composed of POLR3A/RPC1, POLR3B/RPC2, POLR1C/RPAC1, POLR1D/RPAC2, POLR3K/RPC10, POLR2E/RPABC1, POLR2F/RPABC2, POLR2H/RPABC3, POLR2K/RPABC4 and POLR2L/RPABC5; a mobile stalk composed of two subunits POLR3H/RPC8 and CRCP/RPC9, protruding from the core and functioning primarily in transcription initiation; and additional subunits homologous to general transcription factors of the RNA polymerase II machinery, POLR3C/RPC3-POLR3F/RPC6-POLR3G/RPC7 heterotrimer required for transcription initiation and POLR3D/RPC4-POLR3E/RPC5 heterodimer involved in both transcription initiation and termination.

Its subcellular location is the nucleus. The protein localises to the nucleolus. In terms of biological role, DNA-dependent RNA polymerase catalyzes the transcription of DNA into RNA using the four ribonucleoside triphosphates as substrates. Common component of RNA polymerases I, II and III which synthesize ribosomal RNA precursors, mRNA precursors and many functional non-coding RNAs, and a small RNAs, such as 5S rRNA and tRNAs, respectively. The sequence is that of DNA-directed RNA polymerases I, II, and III subunit RPABC4 (Polr2k) from Mus musculus (Mouse).